The chain runs to 547 residues: Ribosomal lysine N-methyltransferase set10 (547 aa).

Positions 17–235 (KSVEFIQSRD…KGNQLFNNYG (219 aa)) constitute an SET domain. Residue Y234 participates in S-adenosyl-L-methionine binding.

Belongs to the class V-like SAM-binding methyltransferase superfamily. RKM1 family.

It is found in the cytoplasm. The protein localises to the nucleus. Functionally, S-adenosyl-L-methionine-dependent protein-lysine N-methyltransferase that methylates ribosomal protein L23 (rpl23a and rpl23b). This is Ribosomal lysine N-methyltransferase set10 (set10) from Schizosaccharomyces pombe (strain 972 / ATCC 24843) (Fission yeast).